The chain runs to 439 residues: UDP-N-acetylglucosamine--peptide N-acetylglucosaminyltransferase stabilizing protein GtfB (439 aa).

Belongs to the GtfB family. Interacts with glycosyltransferase GtfA (Gtf2); probably forms a heterotetramer with 2 subunits each of GtfA and GtfB. Part of the accessory SecA2/SecY2 protein translocation apparatus.

The protein localises to the cell membrane. It participates in protein modification; protein glycosylation. In terms of biological role, required for the polymorphic O-glycosylation of the serine-rich repeat protein Fap1. A stabilizing protein that is part of the accessory SecA2/SecY2 system specifically required to export Fap1, a serine-rich fimbrial adhesin encoded upstream in the same operon. The GtfA-GtfB (Gtf1-Gtf2 in this bacteria) complex adds GlcNAc from UDP-GlcNAc to Fap1, attaching the first sugar residue. Cannot use not UDP-Glc as substrate. Stabilizes the glycosylation activity of GtfA, causing it to partially localize to the cellular membrane where it is more protease resistant. The polypeptide is UDP-N-acetylglucosamine--peptide N-acetylglucosaminyltransferase stabilizing protein GtfB (Streptococcus parasanguinis).